The following is a 240-amino-acid chain: Probable transcriptional regulatory protein HPAG1_0159 (240 aa).

Belongs to the TACO1 family.

It is found in the cytoplasm. This is Probable transcriptional regulatory protein HPAG1_0159 from Helicobacter pylori (strain HPAG1).